Here is a 148-residue protein sequence, read N- to C-terminus: Transcriptional repressor NrdR (148 aa).

A zinc finger lies at Cys3–Cys34. An ATP-cone domain is found at Pro49–Ser139.

This sequence belongs to the NrdR family. Requires Zn(2+) as cofactor.

Its function is as follows. Negatively regulates transcription of bacterial ribonucleotide reductase nrd genes and operons by binding to NrdR-boxes. This Polynucleobacter necessarius subsp. necessarius (strain STIR1) protein is Transcriptional repressor NrdR.